The sequence spans 87 residues: Elastase inhibitor AFLEI (87 aa).

The N-terminal stretch at 1-19 (MKFSLACLLALAGLQAALA) is a signal peptide. A disulfide bridge connects residues C24 and C86.

Its subcellular location is the secreted. In terms of biological role, elastase inhibitor. The sequence is that of Elastase inhibitor AFLEI from Aspergillus fumigatus (strain CBS 144.89 / FGSC A1163 / CEA10) (Neosartorya fumigata).